The chain runs to 168 residues: Small ribosomal subunit protein uS5 (168 aa).

An S5 DRBM domain is found at 11–74; sequence YSEKVVKIDR…ESAKKHLVKI (64 aa).

Belongs to the universal ribosomal protein uS5 family. Part of the 30S ribosomal subunit. Contacts proteins S4 and S8.

Its function is as follows. With S4 and S12 plays an important role in translational accuracy. In terms of biological role, located at the back of the 30S subunit body where it stabilizes the conformation of the head with respect to the body. The chain is Small ribosomal subunit protein uS5 from Leptospira interrogans serogroup Icterohaemorrhagiae serovar copenhageni (strain Fiocruz L1-130).